Consider the following 796-residue polypeptide: Probable phosphoketolase 2 (796 aa).

The protein belongs to the XFP family. Thiamine diphosphate is required as a cofactor.

In Lactiplantibacillus plantarum (strain ATCC BAA-793 / NCIMB 8826 / WCFS1) (Lactobacillus plantarum), this protein is Probable phosphoketolase 2.